Consider the following 59-residue polypeptide: uncharacterized protein (59 aa).

Composition is skewed to basic and acidic residues over residues 1–23 (MAEHRGGSGNFAEDREKASDAGR) and 36–45 (DPQRASEAGK). The interval 1-59 (MAEHRGGSGNFAEDREKASDAGRKGGQHSGGNFKNDPQRASEAGKKGGQQSGGNKSGKS) is disordered. Positions 46–59 (KGGQQSGGNKSGKS) are enriched in gly residues.

This sequence belongs to the con-10 family.

This is an uncharacterized protein from Escherichia coli (strain K12).